Here is a 211-residue protein sequence, read N- to C-terminus: MSNPSSPNPLRVGIGGPVGSGKTALCEMLCKRMRDNYDMAVITNDIYTKEDMEILLRADALPAERLMGVETGGCPHTAIREDASINLEAIARMSADFPDLDLILVESGGDNLAATFSPELSDLTIYVIDVAGGEKIPRKGGPGITRSDLLIINKTDLAPYVGANLDIMAQDAKRMRGERPFVFTNLRSGDGVETVIEYIRKQGLLDEKRKN.

A GTP-binding site is contributed by 16–23 (GPVGSGKT).

This sequence belongs to the SIMIBI class G3E GTPase family. UreG subfamily. Homodimer. UreD, UreF and UreG form a complex that acts as a GTP-hydrolysis-dependent molecular chaperone, activating the urease apoprotein by helping to assemble the nickel containing metallocenter of UreC. The UreE protein probably delivers the nickel.

The protein resides in the cytoplasm. Its function is as follows. Facilitates the functional incorporation of the urease nickel metallocenter. This process requires GTP hydrolysis, probably effectuated by UreG. In Janthinobacterium sp. (strain Marseille) (Minibacterium massiliensis), this protein is Urease accessory protein UreG.